Reading from the N-terminus, the 168-residue chain is Monothiol glutaredoxin-S7, chloroplastic (168 aa).

The N-terminal 54 residues, 1-54, are a transit peptide targeting the chloroplast; the sequence is MAATAAASVAAISPLPGASLPRPVSARVPLLPRASPPTWRLSVGSARARSTRCL. A Glutaredoxin domain is found at 67 to 168; the sequence is RATLDKVVGS…QETLEKAMLS (102 aa). Lys84 is a glutathione binding site. Cys92 is a binding site for [2Fe-2S] cluster. Glutathione-binding positions include Arg121, Phe133, and 146–147; that span reads CD.

It belongs to the glutaredoxin family. CGFS subfamily.

Its subcellular location is the plastid. The protein resides in the chloroplast. May only reduce GSH-thiol disulfides, but not protein disulfides. This Oryza sativa subsp. japonica (Rice) protein is Monothiol glutaredoxin-S7, chloroplastic (GRXS7).